Reading from the N-terminus, the 552-residue chain is Carboxypeptidase Y homolog A (552 aa).

Positions 1 to 18 (MRIATSTLLVGAASAAFA) are cleaved as a signal peptide. A propeptide spanning residues 19-133 (PQDGTQRVLN…KLDNYNLRAR (115 aa)) is cleaved from the precursor. Cystine bridges form between Cys-187–Cys-427, Cys-321–Cys-335, Cys-345–Cys-368, Cys-352–Cys-361, and Cys-390–Cys-397. Asn-218 is a glycosylation site (N-linked (GlcNAc...) asparagine). The active site involves Ser-274. The active site involves Asp-466. N-linked (GlcNAc...) asparagine glycosylation is present at Asn-516. His-527 is an active-site residue.

This sequence belongs to the peptidase S10 family.

The protein localises to the vacuole. It carries out the reaction Release of a C-terminal amino acid with broad specificity.. In terms of biological role, vacuolar carboxypeptidase involved in degradation of small peptides. Digests preferentially peptides containing an aliphatic or hydrophobic residue in P1' position, as well as methionine, leucine or phenylalanine in P1 position of ester substrate. The protein is Carboxypeptidase Y homolog A (CPYA) of Pyricularia oryzae (strain 70-15 / ATCC MYA-4617 / FGSC 8958) (Rice blast fungus).